Consider the following 516-residue polypeptide: Probable cytochrome P450 9f2 (516 aa).

Cys-460 is a binding site for heme.

Belongs to the cytochrome P450 family. Requires heme as cofactor.

It is found in the endoplasmic reticulum membrane. Its subcellular location is the microsome membrane. Its function is as follows. May be involved in the metabolism of insect hormones and in the breakdown of synthetic insecticides. The chain is Probable cytochrome P450 9f2 (Cyp9f2) from Drosophila melanogaster (Fruit fly).